The primary structure comprises 386 residues: Acetate kinase (386 aa).

Asn7 contacts Mg(2+). Residue Lys14 coordinates ATP. Arg78 lines the substrate pocket. The active-site Proton donor/acceptor is Asp135. Residues 195–199 (HLGNG), 268–270 (DMR), and 316–320 (GIGEN) each bind ATP. Glu370 is a Mg(2+) binding site.

The protein belongs to the acetokinase family. In terms of assembly, homodimer. Mg(2+) is required as a cofactor. Mn(2+) serves as cofactor.

Its subcellular location is the cytoplasm. It carries out the reaction acetate + ATP = acetyl phosphate + ADP. It participates in metabolic intermediate biosynthesis; acetyl-CoA biosynthesis; acetyl-CoA from acetate: step 1/2. In terms of biological role, catalyzes the formation of acetyl phosphate from acetate and ATP. Can also catalyze the reverse reaction. The chain is Acetate kinase from Arthrobacter sp. (strain FB24).